The sequence spans 65 residues: Neurotoxin Bot2 (65 aa).

In terms of domain architecture, LCN-type CS-alpha/beta spans 2–64 (RDAYIAQPEN…VPIRIEGKCH (63 aa)). Disulfide bonds link C12/C63, C16/C36, C22/C46, and C26/C48. Position 65 is a phenylalanine amide (F65).

The protein belongs to the long (4 C-C) scorpion toxin superfamily. Sodium channel inhibitor family. Alpha subfamily. In terms of tissue distribution, expressed by the venom gland.

The protein localises to the secreted. Binds to sodium channels (Nav) and inhibits the inactivation of the activated channels, thereby blocking neuronal transmission. This Buthus occitanus tunetanus (Common European scorpion) protein is Neurotoxin Bot2.